We begin with the raw amino-acid sequence, 365 residues long: Phosphoserine aminotransferase (365 aa).

Arg-42 provides a ligand contact to L-glutamate. Pyridoxal 5'-phosphate-binding positions include 76–77 (GR), Trp-102, Thr-156, Asp-175, and Gln-198. Lys-199 carries the N6-(pyridoxal phosphate)lysine modification. 240-241 (NT) provides a ligand contact to pyridoxal 5'-phosphate.

It belongs to the class-V pyridoxal-phosphate-dependent aminotransferase family. SerC subfamily. Homodimer. It depends on pyridoxal 5'-phosphate as a cofactor.

It localises to the cytoplasm. It carries out the reaction O-phospho-L-serine + 2-oxoglutarate = 3-phosphooxypyruvate + L-glutamate. The catalysed reaction is 4-(phosphooxy)-L-threonine + 2-oxoglutarate = (R)-3-hydroxy-2-oxo-4-phosphooxybutanoate + L-glutamate. Its pathway is amino-acid biosynthesis; L-serine biosynthesis; L-serine from 3-phospho-D-glycerate: step 2/3. It functions in the pathway cofactor biosynthesis; pyridoxine 5'-phosphate biosynthesis; pyridoxine 5'-phosphate from D-erythrose 4-phosphate: step 3/5. Its function is as follows. Catalyzes the reversible conversion of 3-phosphohydroxypyruvate to phosphoserine and of 3-hydroxy-2-oxo-4-phosphonooxybutanoate to phosphohydroxythreonine. This chain is Phosphoserine aminotransferase, found in Shewanella oneidensis (strain ATCC 700550 / JCM 31522 / CIP 106686 / LMG 19005 / NCIMB 14063 / MR-1).